We begin with the raw amino-acid sequence, 137 residues long: BolA-like protein 1 (137 aa).

A Phosphoserine modification is found at Ser-81. Residues 114-137 (WRENSQLDTSPPCLGGNKKTLGTP) are disordered.

Belongs to the BolA/IbaG family. In terms of assembly, interacts with GLRX5. In terms of tissue distribution, widely expressed.

The protein resides in the mitochondrion. Acts as a mitochondrial iron-sulfur (Fe-S) cluster assembly factor that facilitates (Fe-S) cluster insertion into a subset of mitochondrial proteins. Probably acts together with the monothiol glutaredoxin GLRX5. May protect cells against oxidative stress. In Homo sapiens (Human), this protein is BolA-like protein 1.